The following is a 166-amino-acid chain: NAD(P)H-quinone oxidoreductase subunit I, chloroplastic (166 aa).

4Fe-4S ferredoxin-type domains are found at residues 55–84 (GRIH…VDWK) and 95–124 (LNYS…MTEE). 8 residues coordinate [4Fe-4S] cluster: Cys64, Cys67, Cys70, Cys74, Cys104, Cys107, Cys110, and Cys114.

Belongs to the complex I 23 kDa subunit family. As to quaternary structure, NDH is composed of at least 16 different subunits, 5 of which are encoded in the nucleus. It depends on [4Fe-4S] cluster as a cofactor.

It is found in the plastid. Its subcellular location is the chloroplast thylakoid membrane. The enzyme catalyses a plastoquinone + NADH + (n+1) H(+)(in) = a plastoquinol + NAD(+) + n H(+)(out). The catalysed reaction is a plastoquinone + NADPH + (n+1) H(+)(in) = a plastoquinol + NADP(+) + n H(+)(out). Functionally, NDH shuttles electrons from NAD(P)H:plastoquinone, via FMN and iron-sulfur (Fe-S) centers, to quinones in the photosynthetic chain and possibly in a chloroplast respiratory chain. The immediate electron acceptor for the enzyme in this species is believed to be plastoquinone. Couples the redox reaction to proton translocation, and thus conserves the redox energy in a proton gradient. This chain is NAD(P)H-quinone oxidoreductase subunit I, chloroplastic, found in Melampodium leucanthum (Black foot daisy).